Reading from the N-terminus, the 852-residue chain is Serine/threonine-protein kinase pakB (852 aa).

Residues 1–334 (MEQSKRVSMM…NVGNKQDEEK (334 aa)) are disordered. Phosphoserine; by autocatalysis is present on Ser-8. Pro residues predominate over residues 24–35 (SPPPNRKPPPPN). Over residues 44–56 (SSLNSSGSSFVSP) the composition is skewed to low complexity. Over residues 57–74 (SPSPSPSPQQPVKRPLPS) the composition is skewed to pro residues. 2 stretches are compositionally biased toward low complexity: residues 90-117 (RPQQ…NSNG) and 124-163 (FSSS…GSSN). The segment covering 181–191 (TPPPPPQPTPS) has biased composition (pro residues). Residues 201–210 (ASHNNTQHNI) are compositionally biased toward polar residues. 2 stretches are compositionally biased toward low complexity: residues 246-270 (SPGS…STPI) and 293-317 (SNSN…ATTS). The 14-residue stretch at 356–369 (VGSPFNVKHNIHVN) folds into the CRIB domain. Over residues 419 to 433 (AQQEQQALMQKQMQQ) the composition is skewed to low complexity. The disordered stretch occupies residues 419-526 (AQQEQQALMQ…GILSQQQEQQ (108 aa)). Basic residues predominate over residues 470-485 (PQHHHQQQPPQQHHHQ). Low complexity predominate over residues 486-514 (QQQQQHNNNNNNNNNNNNNNNNQQSAQQQ). In terms of domain architecture, Protein kinase spans 570-823 (GEGSTKIGEG…AKVLLNHPFL (254 aa)). ATP-binding positions include 576–584 (IGEGAAGEV) and Lys-599. Catalysis depends on Asp-691, which acts as the Proton acceptor.

It belongs to the protein kinase superfamily. STE Ser/Thr protein kinase family. STE20 subfamily. Interacts with rac1A, rac1B, rac1C, racA, racB, racC and racF1. Mg(2+) is required as a cofactor. Autophosphorylated at Ser-8. This may stimulate interaction with GTP-bound Rac family members which then further stimulates autophosphorylation and kinase activity.

It localises to the membrane. The protein resides in the cytoplasm. Its subcellular location is the cytoskeleton. The catalysed reaction is L-seryl-[protein] + ATP = O-phospho-L-seryl-[protein] + ADP + H(+). The enzyme catalyses L-threonyl-[protein] + ATP = O-phospho-L-threonyl-[protein] + ADP + H(+). Functionally, regulator of the myosin I component of the cytoskeleton: required for regulation of cytokinesis, phagocytosis and pinocytosis. The protein is Serine/threonine-protein kinase pakB of Dictyostelium discoideum (Social amoeba).